Here is a 61-residue protein sequence, read N- to C-terminus: Small ribosomal subunit protein uS14 (61 aa).

Zn(2+)-binding residues include Cys-24, Cys-27, Cys-40, and Cys-43.

Belongs to the universal ribosomal protein uS14 family. Zinc-binding uS14 subfamily. Part of the 30S ribosomal subunit. Contacts proteins S3 and S10. Zn(2+) serves as cofactor.

Functionally, binds 16S rRNA, required for the assembly of 30S particles and may also be responsible for determining the conformation of the 16S rRNA at the A site. In Halalkalibacterium halodurans (strain ATCC BAA-125 / DSM 18197 / FERM 7344 / JCM 9153 / C-125) (Bacillus halodurans), this protein is Small ribosomal subunit protein uS14.